Consider the following 579-residue polypeptide: Suppressor of cytokine signaling 7 (579 aa).

3 disordered regions span residues 1 to 25, 89 to 270, and 295 to 315; these read MVFR…GPSE, PPPP…RTQS, and QRGL…RSLS. Pro residues-rich tracts occupy residues 89–99, 155–165, and 185–196; these read PPPPQPPPPAA, PPGPELPPVPF, and QPPPPPPPPGPL. Residues 124 to 492 form a mediates interaction with SORBS3 region; that stretch reads AESLETNSCS…GKFLYFLRSR (369 aa). Positions 206 to 217 are enriched in basic residues; it reads GSFKIRLSRLFR. Residues 301–311 show a composition bias toward pro residues; it reads PHPPTPPPPPR. In terms of domain architecture, SH2 spans 398 to 507; the sequence is WYWGPMNWED…PTPVQLLYPV (110 aa). Residues 502-552 form the SOCS box domain; that stretch reads QLLYPVSRFSNVKSLQHLCRFRIRQLVRIDHIPDLPLPKPLISYIRKFYYY.

In terms of assembly, substrate-recognition component of the ECS(SOCS7) complex, composed of SOCS7, CUL5, ELOB, ELOC and RNF7/RBX2. Interacts, via the third proline-rich region, with the second SH3 domain of the adapter protein NCK1. Also interacts with GRB2, INSR, PLCG1, SORBS3/vinexin, and phosphorylated STAT3 and STAT5. Interacts with SEPT6. Interacts with phosphorylated IRS4 and PIK3R1. As to expression, widely expressed with higher expression in brain and testis where it is expressed by spermatocytes and early spermatids. Also significantly expressed in spleen, skeletal muscle and kidney.

The protein resides in the cytoplasm. It is found in the nucleus. The protein localises to the cell membrane. Its pathway is protein modification; protein ubiquitination. Substrate-recognition component of a cullin-5-RING E3 ubiquitin-protein ligase complex (ECS complex, also named CRL5 complex), which mediates the ubiquitination and subsequent proteasomal degradation of target proteins, such as DAB1 and IRS1. Specifically recognizes and binds phosphorylated proteins via its SH2 domain, promoting their ubiquitination. The ECS(SOCS7) complex acts as a key regulator of reelin signaling by mediating ubiquitination and degradation of phosphorylated DAB1 in the cortical plate of the developing cerebral cortex, thereby regulating neuron positioning during cortex development. Functions in insulin signaling and glucose homeostasis through IRS1 ubiquitination and subsequent proteasomal degradation. Also inhibits prolactin, growth hormone and leptin signaling by preventing STAT3 and STAT5 activation, sequestering them in the cytoplasm and reducing their binding to DNA. This Mus musculus (Mouse) protein is Suppressor of cytokine signaling 7.